A 199-amino-acid polypeptide reads, in one-letter code: Thymidylate kinase (199 aa).

Gly7 to Thr14 serves as a coordination point for ATP.

It belongs to the thymidylate kinase family.

It carries out the reaction dTMP + ATP = dTDP + ADP. In terms of biological role, phosphorylation of dTMP to form dTDP in both de novo and salvage pathways of dTTP synthesis. The polypeptide is Thymidylate kinase (Tropheryma whipplei (strain Twist) (Whipple's bacillus)).